A 111-amino-acid polypeptide reads, in one-letter code: MISDKIKLTAKDILEKEFKTGMRGYQQEEVDKFLDMIIKDYEAFHKEFDQLKQQNARLKRELEEQKVAATQVPQQPVQTPVAQPVYNNTNTDILKRLSNLEKAVFGSKLYE.

The stretch at 38–72 forms a coiled coil; the sequence is IKDYEAFHKEFDQLKQQNARLKRELEEQKVAATQV.

The protein belongs to the GpsB family. As to quaternary structure, forms polymers through the coiled coil domains. Interacts with PBP1, MreC and EzrA.

The protein resides in the cytoplasm. In terms of biological role, divisome component that associates with the complex late in its assembly, after the Z-ring is formed, and is dependent on DivIC and PBP2B for its recruitment to the divisome. Together with EzrA, is a key component of the system that regulates PBP1 localization during cell cycle progression. Its main role could be the removal of PBP1 from the cell pole after pole maturation is completed. Also contributes to the recruitment of PBP1 to the division complex. Not essential for septum formation. The protein is Cell cycle protein GpsB of Bacillus mycoides (strain KBAB4) (Bacillus weihenstephanensis).